Consider the following 559-residue polypeptide: Probable 2-ketoarginine decarboxylase AruI (559 aa).

A thiamine diphosphate-binding site is contributed by glutamate 76.

It belongs to the TPP enzyme family. Thiamine diphosphate serves as cofactor.

It carries out the reaction 5-guanidino-2-oxopentanoate + H(+) = 4-guanidinobutanal + CO2. The protein operates within amino-acid degradation; L-arginine degradation. Catalyzes the decarboxylation of 2-ketoarginine, leading to the formation of 4-guanidinobutyraldehyde. The chain is Probable 2-ketoarginine decarboxylase AruI (aruI) from Pseudomonas aeruginosa (strain ATCC 15692 / DSM 22644 / CIP 104116 / JCM 14847 / LMG 12228 / 1C / PRS 101 / PAO1).